The chain runs to 502 residues: Keratin, type II microfibrillar, component 5 (502 aa).

At Ser1 the chain carries Blocked amino end (Ser). Positions 1 to 122 (SCRSYRISPG…PNAQCVKHQE (122 aa)) are head. In terms of domain architecture, IF rod spans 122-433 (EKEQIKNLNS…RLLEGEEQRL (312 aa)). Positions 123–157 (KEQIKNLNSRFAAFIDKVRFLEQQNKLLETKWQFY) are coil 1A. The interval 158-167 (QNQRCCESNL) is linker 1. The coil 1B stretch occupies residues 168-268 (EPLFNGYIET…YDEEIQILNA (101 aa)). Residue Lys228 forms a Glycyl lysine isopeptide (Lys-Gly) (interchain with G-Cter in SUMO1) linkage. Residues 269–285 (HISDTSVIVKMDNSRDL) are linker 12. The coil 2 stretch occupies residues 286 to 429 (NMDCVVAEIK…ATYRRLLEGE (144 aa)). Residues 430 to 502 (EQRLCEGVGS…CGSSRSVRFA (73 aa)) form a tail region.

The protein belongs to the intermediate filament family. In terms of tissue distribution, hard keratin wool.

Its function is as follows. Wool microfibrillar keratin. This chain is Keratin, type II microfibrillar, component 5, found in Ovis aries (Sheep).